The chain runs to 84 residues: Large ribosomal subunit protein bL27 (84 aa).

This sequence belongs to the bacterial ribosomal protein bL27 family.

The protein is Large ribosomal subunit protein bL27 of Buchnera aphidicola subsp. Schizaphis graminum (strain Sg).